The chain runs to 299 residues: MAEFPASLLILNGKSTDNLPLREAIMLLREEGMTIHVRITWEKGDAARFVEEARKLGVATVIAGGGDGTINEVSTALIQCEGDDIPALGILPLGTANDFATSVGIPEALDKALKLAIAGNAIAIDMAQVNKQTCFINMATGGFGTRITTETPEKLKAALGGVSYIIHGLMRMDTLQPDRCEIRGENFHWQGDALVIGIGNGRQAGGGQQLCPNALINDGLLQLRIFTGDEIIPTLVSTLKSDEDNPNIIEGASSWFDIQAPHEITFNLDGEPLSGQNFHIEILPAALRCRLPPDCPLLR.

The DAGKc domain maps to A2–T133. ATP-binding positions include T40, G66–E72, and T95. Residues L215, D218, and L220 each coordinate Mg(2+). The active-site Proton acceptor is E271.

Belongs to the diacylglycerol/lipid kinase family. YegS lipid kinase subfamily. The cofactor is Mg(2+). Ca(2+) serves as cofactor.

The protein localises to the cytoplasm. Its function is as follows. Probably phosphorylates lipids; the in vivo substrate is unknown. In Escherichia coli O6:K15:H31 (strain 536 / UPEC), this protein is Probable lipid kinase YegS.